Consider the following 394-residue polypeptide: Elongation factor Tu (394 aa).

A tr-type G domain is found at 10-204 (KPHVNIGTIG…AVDSYIPQPV (195 aa)). The G1 stretch occupies residues 19–26 (GHVDHGKT). 19 to 26 (GHVDHGKT) contacts GTP. Residue Thr26 coordinates Mg(2+). The segment at 60–64 (GITIS) is G2. Positions 81 to 84 (DCPG) are G3. GTP contacts are provided by residues 81 to 85 (DCPGH) and 136 to 139 (NKVD). The tract at residues 136 to 139 (NKVD) is G4. Residues 174 to 176 (SAL) are G5.

The protein belongs to the TRAFAC class translation factor GTPase superfamily. Classic translation factor GTPase family. EF-Tu/EF-1A subfamily. Monomer.

The protein localises to the cytoplasm. The enzyme catalyses GTP + H2O = GDP + phosphate + H(+). GTP hydrolase that promotes the GTP-dependent binding of aminoacyl-tRNA to the A-site of ribosomes during protein biosynthesis. The sequence is that of Elongation factor Tu from Rickettsia helvetica.